Here is a 433-residue protein sequence, read N- to C-terminus: Mitochondrial inner membrane magnesium transporter MIT1 (433 aa).

A coiled-coil region spans residues 257–298 (TNKLLRDMMKIKNNLQKLSNLLNALRTNIEKILNNENDMKNM). Residues 360–380 (FILLNAKISFSTLLFSISSVV) traverse the membrane as a helical segment. Residues 381–396 (TSLFGMNLKNFVEDSN) are Extracellular-facing. A helical transmembrane segment spans residues 397-417 (YAFIIVSIFVSVWSIIGIYVT). Topologically, residues 418-433 (KNINTLLKFFDRYNFR) are mitochondrial matrix.

It belongs to the CorA metal ion transporter (MIT) (TC 1.A.35) family.

It is found in the mitochondrion inner membrane. Mitochondrial inner membrane magnesium transporter required for mitochondrial magnesium homeostasis. Involved in the development of the sporozoite in the mosquito vector midgut. In Plasmodium berghei (strain Anka), this protein is Mitochondrial inner membrane magnesium transporter MIT1.